We begin with the raw amino-acid sequence, 21 residues long: MAKINELLRESTTTNSNSIGR.

A disordered region spans residues 1-21 (MAKINELLRESTTTNSNSIGR). A compositionally biased stretch (polar residues) spans 10–21 (ESTTTNSNSIGR).

It belongs to the T4 phage capsid protein family. Homopentamer. A total of 55 subunits of gp24 forms the 11 pentamers. Interacts with portal protein gp20. Interacts with gp23 that forms 160 hexamers. Proteolytic cleavage give rise to gp24*.

The protein localises to the virion. Capsid protein that self-associates to form 11 pentons, building the T=13 laevo capsid in association with 160 hexamers of gp23* and one dodecamer of gp20. The protein is Capsid vertex protein gp24 of Escherichia coli (Bacteriophage T6).